We begin with the raw amino-acid sequence, 338 residues long: Solute-binding protein Rfer_1840 (338 aa).

The N-terminal stretch at methionine 1–alanine 25 is a signal peptide. Malonate contacts are provided by residues arginine 47, tyrosine 100, arginine 175, serine 197, threonine 214–serine 218, and glutamate 244.

The protein belongs to the bacterial solute-binding protein 7 family. As to quaternary structure, the complex is comprised of an extracytoplasmic solute-binding protein and a heteromeric permease formed by two transmembrane proteins.

The protein resides in the periplasm. Functionally, solute-binding protein that binds malonate (in vitro). Probably part of a tripartite ATP-independent periplasmic (TRAP) transport system that mediates solute transport into the cytoplasm. The chain is Solute-binding protein Rfer_1840 from Albidiferax ferrireducens (strain ATCC BAA-621 / DSM 15236 / T118) (Rhodoferax ferrireducens).